The following is a 208-amino-acid chain: Protein GrpE (208 aa).

The interval 1 to 62 (MTEKDESVKS…ETAVDPKDEE (62 aa)) is disordered. Over residues 46 to 55 (SNEESSEETA) the composition is skewed to acidic residues.

It belongs to the GrpE family. Homodimer.

Its subcellular location is the cytoplasm. Participates actively in the response to hyperosmotic and heat shock by preventing the aggregation of stress-denatured proteins, in association with DnaK and GrpE. It is the nucleotide exchange factor for DnaK and may function as a thermosensor. Unfolded proteins bind initially to DnaJ; upon interaction with the DnaJ-bound protein, DnaK hydrolyzes its bound ATP, resulting in the formation of a stable complex. GrpE releases ADP from DnaK; ATP binding to DnaK triggers the release of the substrate protein, thus completing the reaction cycle. Several rounds of ATP-dependent interactions between DnaJ, DnaK and GrpE are required for fully efficient folding. This is Protein GrpE from Staphylococcus haemolyticus (strain JCSC1435).